Here is a 168-residue protein sequence, read N- to C-terminus: Ubiquitin-conjugating enzyme E2 7 (168 aa).

A disordered region spans residues 1–21; sequence MATAPARRASSSRSSSEISRT. The UBC core domain occupies 6–166; the sequence is ARRASSSRSS…VRRAVRKSQE (161 aa). Catalysis depends on Cys-92, which acts as the Glycyl thioester intermediate.

This sequence belongs to the ubiquitin-conjugating enzyme family.

The catalysed reaction is S-ubiquitinyl-[E1 ubiquitin-activating enzyme]-L-cysteine + [E2 ubiquitin-conjugating enzyme]-L-cysteine = [E1 ubiquitin-activating enzyme]-L-cysteine + S-ubiquitinyl-[E2 ubiquitin-conjugating enzyme]-L-cysteine.. It participates in protein modification; protein ubiquitination. Its function is as follows. Catalyzes the covalent attachment of ubiquitin to other proteins so as to signal them for selective protein degradation. Involved in the formation of multiubiquitin chains. The sequence is that of Ubiquitin-conjugating enzyme E2 7 (UBC7) from Triticum aestivum (Wheat).